Consider the following 336-residue polypeptide: Apyrase (336 aa).

The signal sequence occupies residues 1–21; that stretch reads MFLKFCVVAFAICLSINLSEG. An N-linked (GlcNAc...) asparagine glycan is attached at asparagine 209.

Belongs to the apyrase family. It depends on Ca(2+) as a cofactor. As to expression, salivary gland (at protein level).

It localises to the secreted. It carries out the reaction a ribonucleoside 5'-triphosphate + 2 H2O = a ribonucleoside 5'-phosphate + 2 phosphate + 2 H(+). Facilitates hematophagy by inhibiting ADP- and collagen-dependent platelet aggregation in the host. Cleaves adenosine triphosphate (ATP) and adenosine diphosphate (ADP) to adenosine monophosphate (AMP) and inorganic phosphate in calcium-dependent manner. The sequence is that of Apyrase from Phlebotomus duboscqi (Sandfly).